The chain runs to 81 residues: Trefoil factor 3 (81 aa).

The N-terminal stretch at 1 to 22 (METRAFWTTLLLVLVAGSSCKA) is a signal peptide. The P-type domain occupies 31–74 (SQCMVPANVRVDCGYPTVTSEQCNNRGCCFDSSIPNVPWCFKPL). 3 disulfides stabilise this stretch: Cys33–Cys59, Cys43–Cys58, and Cys53–Cys70.

In terms of assembly, monomer. Homodimer; disulfide-linked. As to expression, expressed in goblet cells of the intestines, and colon, in paraventricular hypothalamus and supraoptic nuclei. Weakly expressed in gastric epithelial cells (at protein level). Expressed by goblet cells of small and large intestinal epithelia, kidney and stomach. Expressed in the paraventricular hypothalamus, arcuate nucleus and amygdala of the brain. Weakly expressed in gastric epithelial cells.

It localises to the secreted. It is found in the extracellular space. The protein resides in the extracellular matrix. Its subcellular location is the cytoplasm. Functionally, involved in the maintenance and repair of the intestinal mucosa. Promotes the mobility of epithelial cells in healing processes (motogen). The protein is Trefoil factor 3 (Tff3) of Rattus norvegicus (Rat).